The chain runs to 432 residues: Glutamate-1-semialdehyde 2,1-aminomutase 1 (432 aa).

Lysine 268 carries the post-translational modification N6-(pyridoxal phosphate)lysine.

The protein belongs to the class-III pyridoxal-phosphate-dependent aminotransferase family. HemL subfamily. As to quaternary structure, homodimer. The cofactor is pyridoxal 5'-phosphate.

The protein localises to the cytoplasm. The enzyme catalyses (S)-4-amino-5-oxopentanoate = 5-aminolevulinate. The protein operates within porphyrin-containing compound metabolism; protoporphyrin-IX biosynthesis; 5-aminolevulinate from L-glutamyl-tRNA(Glu): step 2/2. This Bacillus mycoides (strain KBAB4) (Bacillus weihenstephanensis) protein is Glutamate-1-semialdehyde 2,1-aminomutase 1.